Reading from the N-terminus, the 192-residue chain is Phosphoheptose isomerase (192 aa).

The region spanning 34 to 192 (VVDAYRAGNK…VERELFLKGN (159 aa)) is the SIS domain. A substrate-binding site is contributed by 49 to 51 (NGG). Residues His-58 and Glu-62 each contribute to the Zn(2+) site. Residues Glu-62, 91–92 (ND), 117–119 (STS), Ser-122, and Gln-169 contribute to the substrate site. 2 residues coordinate Zn(2+): Gln-169 and His-177.

Belongs to the SIS family. GmhA subfamily. As to quaternary structure, homotetramer. It depends on Zn(2+) as a cofactor.

It is found in the cytoplasm. It catalyses the reaction 2 D-sedoheptulose 7-phosphate = D-glycero-alpha-D-manno-heptose 7-phosphate + D-glycero-beta-D-manno-heptose 7-phosphate. Its pathway is carbohydrate biosynthesis; D-glycero-D-manno-heptose 7-phosphate biosynthesis; D-glycero-alpha-D-manno-heptose 7-phosphate and D-glycero-beta-D-manno-heptose 7-phosphate from sedoheptulose 7-phosphate: step 1/1. Functionally, catalyzes the isomerization of sedoheptulose 7-phosphate in D-glycero-D-manno-heptose 7-phosphate. This is Phosphoheptose isomerase from Geobacter sp. (strain M21).